The primary structure comprises 379 residues: Lipid-A-disaccharide synthase (379 aa).

It belongs to the LpxB family.

It catalyses the reaction a lipid X + a UDP-2-N,3-O-bis[(3R)-3-hydroxyacyl]-alpha-D-glucosamine = a lipid A disaccharide + UDP + H(+). Its pathway is bacterial outer membrane biogenesis; LPS lipid A biosynthesis. In terms of biological role, condensation of UDP-2,3-diacylglucosamine and 2,3-diacylglucosamine-1-phosphate to form lipid A disaccharide, a precursor of lipid A, a phosphorylated glycolipid that anchors the lipopolysaccharide to the outer membrane of the cell. This is Lipid-A-disaccharide synthase from Persephonella marina (strain DSM 14350 / EX-H1).